Consider the following 310-residue polypeptide: Tagatose-6-phosphate kinase (310 aa).

Belongs to the carbohydrate kinase PfkB family. LacC subfamily.

The catalysed reaction is D-tagatofuranose 6-phosphate + ATP = D-tagatofuranose 1,6-bisphosphate + ADP + H(+). Its pathway is carbohydrate metabolism; D-tagatose 6-phosphate degradation; D-glyceraldehyde 3-phosphate and glycerone phosphate from D-tagatose 6-phosphate: step 1/2. The chain is Tagatose-6-phosphate kinase from Staphylococcus aureus (strain MRSA252).